The chain runs to 140 residues: Sec-independent protein translocase protein TatB (140 aa).

Residues 2–22 (LPGIGFSELLLIGLAALIIIG) traverse the membrane as a helical segment. Residues 90 to 140 (VNSAVMREHPVSPPPPATPPAPPAELPPEAAPHADSQNAPPEADPAKGDRT) form a disordered region. Over residues 100 to 119 (VSPPPPATPPAPPAELPPEA) the composition is skewed to pro residues.

Belongs to the TatB family. In terms of assembly, the Tat system comprises two distinct complexes: a TatABC complex, containing multiple copies of TatA, TatB and TatC subunits, and a separate TatA complex, containing only TatA subunits. Substrates initially bind to the TatABC complex, which probably triggers association of the separate TatA complex to form the active translocon.

The protein resides in the cell inner membrane. Part of the twin-arginine translocation (Tat) system that transports large folded proteins containing a characteristic twin-arginine motif in their signal peptide across membranes. Together with TatC, TatB is part of a receptor directly interacting with Tat signal peptides. TatB may form an oligomeric binding site that transiently accommodates folded Tat precursor proteins before their translocation. The sequence is that of Sec-independent protein translocase protein TatB from Hyphomonas neptunium (strain ATCC 15444).